The chain runs to 509 residues: Ribonuclease Y (509 aa).

The helical transmembrane segment at 5-25 threads the bilayer; sequence IAGVSGIAGAAVGAGACYLWL. A KH domain is found at 199-265; the sequence is LINLVNLPSD…TRVIEILIED (67 aa). An HD domain is found at 325-418; it reads ALAHTLEVAK…VCAADTLSAA (94 aa).

It belongs to the RNase Y family.

The protein resides in the cell membrane. Functionally, endoribonuclease that initiates mRNA decay. The polypeptide is Ribonuclease Y (Sulfurovum sp. (strain NBC37-1)).